The sequence spans 482 residues: Serine carboxypeptidase-like 36 (482 aa).

Residues 1–25 (MGKRQDWSVTACIFLFLSLASQIHC) form the signal peptide. 3 disulfide bridges follow: Cys119-Cys363, Cys275-Cys286, and Cys310-Cys331. Ser210 is an active-site residue. Asn228 is a glycosylation site (N-linked (GlcNAc...) asparagine). Residues Asn312 and Asn352 are each glycosylated (N-linked (GlcNAc...) asparagine). Asp402 is an active-site residue. N-linked (GlcNAc...) asparagine glycosylation is found at Asn418 and Asn444. His455 is a catalytic residue.

It belongs to the peptidase S10 family. As to expression, expressed in seedlings, flowers and siliques.

The protein resides in the secreted. Its function is as follows. Probable carboxypeptidase. This chain is Serine carboxypeptidase-like 36 (SCPL36), found in Arabidopsis thaliana (Mouse-ear cress).